The following is a 1307-amino-acid chain: MSATKKTYSSTTSAKSKHSVRVAQTTADAALEAVYEMSGDSGDSFDYSKSVGQSAESVPAGAVTAYLQRMQREGLIQNFGCMVAVEEPNFCVIAYSENASEFLDLIPQAVPSMGEMDVLGIGTDIRTLFTPSSSAALEKAAATQDISLLNPITVHCRRSGKPLYAIAHRIDIGIVIDFEAVKMIDVPVSAAAGALQSHKLAARAITRLQALPGGDIELLCDTIVEEVRELTGYDRVMAFKFHEDEHGEVVAEIRRMDLEPYMGLHYPATDIPQASRFLLMKNRVRLIADCYASPVKLIQDPDIRQPVSLAGSTLRAPHGCHAQYMGNMGSIASLVMAVIINDNEEYSRGAIQRGRKLWGLVVCQHTSPRTVPFPLRSVCEFLMQVFGMQLNLHVELAAQLREKHILRTQTLLCDMLLRDAPIGIVSQTPNIMDLVKCDGAALYYGKRVWLLGTTPTENQIKEIADWLLEHHNDSTGLSTDSLADANYPGAHLLGDAVCGMAAAKITAKDFLFWFRSHTATEVKWGGAKHDPDEKDDGRKMHPRSSFKAFLEVVNKRSPPWEDVEMDAIHSLQLILRGSFRDIADSDTKTMIHARLNDLKLQGVEERNALANEMSRVLETAAAPILAVDSRGMINAWNAKIAQVTGLPVEEAMHCSLTKDLVLDESVVVVERLLSLALQGEEEQNVEIKLKTFGTQTTERAVILIVNACCSRDASDFVVGVFFVGQDVTEQRMFMDRFTRIQGGEKTTVQDPHPLMRPSFDGDEFGRTFKRNSALGGLKDHATGSVERLDLYLRRAEECMEVMETIPSPKFNNKQCQYLAGKLKAVLQSASLFLRISHHEHHELGASIDMGRHVEIFKLLLALAKEIESFIQGCCKDEWIKAAMTLTNVSEYVSSMGFNLELCKIAFCKSCAASGSLTLDQIEVICKDEAEVVKRNASIDVDTLFAKVIYDLTEKTLSSDQNDLAIYLLQRLKRAKPILPSFSSRPSWWNFYDDWSFSEKFFQWIQITGSLGSGSSATVEKAVWLGTPVAKKTFYGRNNEDFKREVEILAELCHPNITSMFCSPLYRRKCSIIMELMDGDLLALMQRRLDRNEDHDSPPFSILEVVDIILQTSEGMNYLHEKGIIHRDLKSMNILVKSVKVTKSEIGYVHVKVADFGLSKTKDSSTRYSNQTWNRGTNRWMAPEVINLGYESTEGEISFDGKVPKYPLKSDVYSFGMVCYEVLTGDVPFPEEKNPNNVKRMVLEGVRPDLPAHCPIELKALITDCWNQDPLKRPSFAVICQKLKYLKYLLMTGFSSYQDSYPSTEEPS.

Positions aspartate 215–valine 394 constitute a GAF domain. Cysteine 320 lines the phytochromobilin pocket. Residues leucine 609–glutamate 680 form the PAS domain. The region spanning glutamine 683–arginine 739 is the PAC domain. The interval aspartate 779–tryptophan 1003 is hinge. In terms of domain architecture, Protein kinase spans isoleucine 1004–serine 1307. ATP contacts are provided by residues leucine 1010–valine 1018 and lysine 1031. Aspartate 1127 is a catalytic residue.

This sequence in the N-terminal section; belongs to the phytochrome family. It in the C-terminal section; belongs to the protein kinase superfamily. Ser/Thr protein kinase family. Homodimer. In terms of processing, contains one covalently linked phytochromobilin chromophore.

Its subcellular location is the cell membrane. The catalysed reaction is L-seryl-[protein] + ATP = O-phospho-L-seryl-[protein] + ADP + H(+). The enzyme catalyses L-threonyl-[protein] + ATP = O-phospho-L-threonyl-[protein] + ADP + H(+). Functionally, regulatory photoreceptor which exists in two forms that are reversibly interconvertible by light: the Pr form that absorbs maximally in the red region of the spectrum and the Pfr form that absorbs maximally in the far-red region. Photoconversion of Pr to Pfr induces an array of morphogenic responses, whereas reconversion of Pfr to Pr cancels the induction of those responses. Pfr controls the expression of a number of nuclear genes including those encoding the small subunit of ribulose-bisphosphate carboxylase, chlorophyll A/B binding protein, protochlorophyllide reductase, rRNA, etc. It also controls the expression of its own gene(s) in a negative feedback fashion. This chain is Light-sensor Protein kinase (PHY1), found in Ceratodon purpureus (Fire moss).